A 363-amino-acid polypeptide reads, in one-letter code: tRNA U34 carboxymethyltransferase (363 aa).

Residues K101, W134, K139, G159, 181–183 (DPS), 221–222 (LE), M237, Y241, and R356 contribute to the carboxy-S-adenosyl-L-methionine site.

It belongs to the class I-like SAM-binding methyltransferase superfamily. CmoB family. As to quaternary structure, homotetramer.

It catalyses the reaction carboxy-S-adenosyl-L-methionine + 5-hydroxyuridine(34) in tRNA = 5-carboxymethoxyuridine(34) in tRNA + S-adenosyl-L-homocysteine + H(+). In terms of biological role, catalyzes carboxymethyl transfer from carboxy-S-adenosyl-L-methionine (Cx-SAM) to 5-hydroxyuridine (ho5U) to form 5-carboxymethoxyuridine (cmo5U) at position 34 in tRNAs. The chain is tRNA U34 carboxymethyltransferase from Psychrobacter cryohalolentis (strain ATCC BAA-1226 / DSM 17306 / VKM B-2378 / K5).